The following is a 297-amino-acid chain: tRNA pseudouridine synthase B (297 aa).

Residue aspartate 41 is the Nucleophile of the active site.

Belongs to the pseudouridine synthase TruB family. Type 1 subfamily.

It carries out the reaction uridine(55) in tRNA = pseudouridine(55) in tRNA. Its function is as follows. Responsible for synthesis of pseudouridine from uracil-55 in the psi GC loop of transfer RNAs. The polypeptide is tRNA pseudouridine synthase B (Synechococcus sp. (strain CC9311)).